A 293-amino-acid polypeptide reads, in one-letter code: 4-hydroxy-tetrahydrodipicolinate synthase (293 aa).

Residue Thr45 coordinates pyruvate. The active-site Proton donor/acceptor is Tyr133. The active-site Schiff-base intermediate with substrate is Lys162. Ile204 is a binding site for pyruvate.

It belongs to the DapA family. As to quaternary structure, homotetramer; dimer of dimers.

It is found in the cytoplasm. The catalysed reaction is L-aspartate 4-semialdehyde + pyruvate = (2S,4S)-4-hydroxy-2,3,4,5-tetrahydrodipicolinate + H2O + H(+). The protein operates within amino-acid biosynthesis; L-lysine biosynthesis via DAP pathway; (S)-tetrahydrodipicolinate from L-aspartate: step 3/4. Catalyzes the condensation of (S)-aspartate-beta-semialdehyde [(S)-ASA] and pyruvate to 4-hydroxy-tetrahydrodipicolinate (HTPA). The sequence is that of 4-hydroxy-tetrahydrodipicolinate synthase from Chelativorans sp. (strain BNC1).